The chain runs to 203 residues: 2-hydroxychromene-2-carboxylate isomerase (203 aa).

Ser-11 (nucleophile) is an active-site residue. Glutathione is bound at residue Ser-11. Substrate contacts are provided by residues Lys-43, 53-54 (NR), and Tyr-84. Glutathione contacts are provided by residues Val-168 and 179–182 (WGND).

Belongs to the GST superfamily. NadH family. Glutathione is required as a cofactor.

The catalysed reaction is 2-hydroxychromene-2-carboxylate = (3E)-4-(2-hydroxyphenyl)-2-oxobut-3-enoate. It functions in the pathway aromatic compound metabolism; naphthalene degradation. Functionally, involved in the naphthalene catabolic pathway. Catalyzes the reversible glutathione-dependent isomerization of 2-hydroxychromene-2-carboxylate (HCCA) to trans-O-hydroxybenzylidenepyruvate (THBPA). The protein is 2-hydroxychromene-2-carboxylate isomerase (nahD) of Pseudomonas putida (Arthrobacter siderocapsulatus).